The primary structure comprises 518 residues: MNVIEKASEGLSRTYEIVIPADDLQARLAAKIEEIRPEVRLKGFRPGKVPTSHIRKMFGESIMGDLLNELVPDTTQKTLDEKKLRPASQPDISVTSEAKDVLAGKADFVFEIALEIMPDFEPADPAKLSVTRPVAEVEDAEVDEALERLANESREFAAKKGGKNAKAEDGDVVVIDFVGKLDGEVFEGGSAEDARVAIGDGAFIPGFEEQLLGAKVGEERELNVTFPEDYQAAQLAGKAAVFDVTVKGLESPQEAKVDDELAKRLGLENLDGLKDALKKRFAGEHGQQSRMKVKRDLLDKLDAEHKFDLPPKMVGAEFDNIWREVAHAIEQDQLEDEDKNKSEDELKSEYREIAERRVRLGLVLAEIGRRNNIDVTQEELSRAINQEAVKYPGQERQVVEFYQKNPNAVAQMRAPIYEEKVVDYILELADVTETTVSKEALYADEDEAPAKPAKKAVAKKKAPAKKAAAKSDDKPAAKKAPAKKAPAKKAAAKDEAPAKKPAAKKKAPAKKAAAKKDA.

The PPIase FKBP-type domain maps to 170–255; that stretch reads GDVVVIDFVG…VKGLESPQEA (86 aa). The interval 447 to 518 is disordered; that stretch reads EAPAKPAKKA…AKKAAAKKDA (72 aa). Basic residues-rich tracts occupy residues 452-468 and 501-518; these read PAKK…KKAA and PAAK…KKDA.

Belongs to the FKBP-type PPIase family. Tig subfamily.

The protein resides in the cytoplasm. The catalysed reaction is [protein]-peptidylproline (omega=180) = [protein]-peptidylproline (omega=0). Its function is as follows. Involved in protein export. Acts as a chaperone by maintaining the newly synthesized protein in an open conformation. Functions as a peptidyl-prolyl cis-trans isomerase. This is Trigger factor from Maricaulis maris (strain MCS10) (Caulobacter maris).